A 562-amino-acid chain; its full sequence is Urease subunit alpha (562 aa).

A Urease domain is found at G131–F562. Ni(2+)-binding residues include H136, H138, and K219. K219 is subject to N6-carboxylysine. Residue H221 coordinates substrate. Ni(2+) contacts are provided by H248 and H274. H322 acts as the Proton donor in catalysis. D362 is a Ni(2+) binding site.

The protein belongs to the metallo-dependent hydrolases superfamily. Urease alpha subunit family. Heterotrimer of UreA (gamma), UreB (beta) and UreC (alpha) subunits. Three heterotrimers associate to form the active enzyme. Ni cation is required as a cofactor. Carboxylation allows a single lysine to coordinate two nickel ions.

It localises to the cytoplasm. It catalyses the reaction urea + 2 H2O + H(+) = hydrogencarbonate + 2 NH4(+). Its pathway is nitrogen metabolism; urea degradation; CO(2) and NH(3) from urea (urease route): step 1/1. The protein is Urease subunit alpha of Paracoccus denitrificans (strain Pd 1222).